A 365-amino-acid chain; its full sequence is P43 5S RNA-binding protein (365 aa).

9 consecutive C2H2-type zinc fingers follow at residues 15–39 (FRCP…MAGH), 45–69 (WKCG…MKRH), 75–100 (HSCP…LYKH), 106–130 (LKCS…VSEH), 136–160 (SVCD…HRRH), 163–187 (YRCS…LKKH), 191–213 (LQCA…KATH), 220–245 (LPCP…RKVH), and 251–275 (HRCP…LVVH).

As to quaternary structure, the 42S RNP particle comprises four subunits each of which contains one molecule of 5S RNA, three molecules of tRNA, two molecules of p50 (EF1-alpha) and one molecule of the 5S RNA binding protein 43.

Its function is as follows. p43 is a 5S RNA binding protein which is a major constituent of oocytes and comprises part of a 42S ribonucleoprotein storage particle. The sequence is that of P43 5S RNA-binding protein from Xenopus borealis (Kenyan clawed frog).